Here is a 244-residue protein sequence, read N- to C-terminus: MTDLVYEQPLNEKIRSYLRLEYLNKQLGNNLNHDHQHRCFYPLFSLCELSERCDYRNEVLKDIERNLLQLGKWQELDHVDSEQIEFYIQSLTQAREQLQRPERCGSQLKQDRFLSALRQRFGMPGACCNFDLPQLHFWLAKPWEERQQDYQAWISHFDPLLTPITLLLQLTRSTAHFDNATAHAGFYQGDSAQALSLVRVRVDAAHGCYPTISGHRNRYAIHFVQFDQQRHSDRSIEFLLATCA.

The protein belongs to the ZapD family. Interacts with FtsZ.

It localises to the cytoplasm. In terms of biological role, cell division factor that enhances FtsZ-ring assembly. Directly interacts with FtsZ and promotes bundling of FtsZ protofilaments, with a reduction in FtsZ GTPase activity. The sequence is that of Cell division protein ZapD from Shewanella sp. (strain MR-4).